We begin with the raw amino-acid sequence, 465 residues long: Ribulose bisphosphate carboxylase large chain (465 aa).

N6,N6,N6-trimethyllysine is present on Lys-4. Residues Asn-113 and Thr-163 each contribute to the substrate site. Residue Lys-165 is the Proton acceptor of the active site. Lys-167 contributes to the substrate binding site. 3 residues coordinate Mg(2+): Lys-191, Asp-193, and Glu-194. N6-carboxylysine is present on Lys-191. His-284 serves as the catalytic Proton acceptor. Substrate-binding residues include Arg-285, His-317, and Ser-369.

It belongs to the RuBisCO large chain family. Type I subfamily. In terms of assembly, heterohexadecamer of 8 large chains and 8 small chains; disulfide-linked. The disulfide link is formed within the large subunit homodimers. It depends on Mg(2+) as a cofactor. The disulfide bond which can form in the large chain dimeric partners within the hexadecamer appears to be associated with oxidative stress and protein turnover.

The protein localises to the plastid. The protein resides in the chloroplast. It carries out the reaction 2 (2R)-3-phosphoglycerate + 2 H(+) = D-ribulose 1,5-bisphosphate + CO2 + H2O. The catalysed reaction is D-ribulose 1,5-bisphosphate + O2 = 2-phosphoglycolate + (2R)-3-phosphoglycerate + 2 H(+). RuBisCO catalyzes two reactions: the carboxylation of D-ribulose 1,5-bisphosphate, the primary event in carbon dioxide fixation, as well as the oxidative fragmentation of the pentose substrate in the photorespiration process. Both reactions occur simultaneously and in competition at the same active site. The chain is Ribulose bisphosphate carboxylase large chain from Senega cruciata (Cross-leaved milkwort).